The primary structure comprises 403 residues: CCA-adding enzyme (403 aa).

ATP is bound by residues Gly-32 and Arg-35. 2 residues coordinate CTP: Gly-32 and Arg-35. Mg(2+)-binding residues include Asp-45 and Asp-47. ATP-binding residues include Arg-116, Asp-159, Arg-162, Arg-165, and Arg-168. CTP-binding residues include Arg-116, Asp-159, Arg-162, Arg-165, and Arg-168.

It belongs to the tRNA nucleotidyltransferase/poly(A) polymerase family. Bacterial CCA-adding enzyme type 3 subfamily. As to quaternary structure, homodimer. Mg(2+) serves as cofactor.

It carries out the reaction a tRNA precursor + 2 CTP + ATP = a tRNA with a 3' CCA end + 3 diphosphate. The enzyme catalyses a tRNA with a 3' CCA end + 2 CTP + ATP = a tRNA with a 3' CCACCA end + 3 diphosphate. Its function is as follows. Catalyzes the addition and repair of the essential 3'-terminal CCA sequence in tRNAs without using a nucleic acid template. Adds these three nucleotides in the order of C, C, and A to the tRNA nucleotide-73, using CTP and ATP as substrates and producing inorganic pyrophosphate. tRNA 3'-terminal CCA addition is required both for tRNA processing and repair. Also involved in tRNA surveillance by mediating tandem CCA addition to generate a CCACCA at the 3' terminus of unstable tRNAs. While stable tRNAs receive only 3'-terminal CCA, unstable tRNAs are marked with CCACCA and rapidly degraded. The protein is CCA-adding enzyme of Streptococcus suis (strain 98HAH33).